Here is a 248-residue protein sequence, read N- to C-terminus: Protein UL24 homolog (248 aa).

The tract at residues 194-248 is disordered; that stretch reads DRPRPTAQGHRPRTHVGPKPSQLTARVPRSARAGRAGGRKGQVGAVGQVCPGAQK. A compositionally biased stretch (low complexity) spans 218–227; that stretch reads ARVPRSARAG.

Belongs to the herpesviridae UL24 family.

It localises to the virion. Its subcellular location is the host cytoplasm. The protein localises to the host nucleus. The protein resides in the host nucleolus. It is found in the host Golgi apparatus. May participate in nuclear egress of viral particles. Plays a role in the dispersal of several host nucleolar proteins including NCL/nucleolin and NPM1. Since deletion of host NCL/nucleolin negatively impact on nuclear egress, UL24 supposedly acts on this process through its effect on host nucleoli. This Homo sapiens (Human) protein is Protein UL24 homolog.